Reading from the N-terminus, the 396-residue chain is Elongation factor Tu (396 aa).

The 197-residue stretch at 10-206 folds into the tr-type G domain; the sequence is KPHVNVGTIG…ALDTYIPEPE (197 aa). A G1 region spans residues 19 to 26; sequence GHVDHGKT. A GTP-binding site is contributed by 19-26; sequence GHVDHGKT. T26 lines the Mg(2+) pocket. The interval 60 to 64 is G2; sequence GITIN. Residues 81–84 are G3; that stretch reads DCPG. GTP contacts are provided by residues 81-85 and 136-139; these read DCPGH and NKAD. The tract at residues 136–139 is G4; the sequence is NKAD. Residues 174-176 are G5; it reads SAL.

It belongs to the TRAFAC class translation factor GTPase superfamily. Classic translation factor GTPase family. EF-Tu/EF-1A subfamily. Monomer.

The protein localises to the cytoplasm. The catalysed reaction is GTP + H2O = GDP + phosphate + H(+). GTP hydrolase that promotes the GTP-dependent binding of aminoacyl-tRNA to the A-site of ribosomes during protein biosynthesis. This is Elongation factor Tu from Thiobacillus denitrificans (strain ATCC 25259 / T1).